The primary structure comprises 173 residues: Large ribosomal subunit protein uL16 (173 aa).

The protein belongs to the universal ribosomal protein uL16 family.

The polypeptide is Large ribosomal subunit protein uL16 (Methanosphaerula palustris (strain ATCC BAA-1556 / DSM 19958 / E1-9c)).